An 819-amino-acid polypeptide reads, in one-letter code: DNA topoisomerase 4 subunit A (819 aa).

Residues 30–496 (LPDIRDGLKP…QIIEIDTASL (467 aa)) enclose the Topo IIA-type catalytic domain. Tyr118 acts as the O-(5'-phospho-DNA)-tyrosine intermediate in catalysis.

This sequence belongs to the type II topoisomerase GyrA/ParC subunit family. ParC type 2 subfamily. In terms of assembly, heterotetramer composed of ParC and ParE.

The protein resides in the cell membrane. The enzyme catalyses ATP-dependent breakage, passage and rejoining of double-stranded DNA.. Functionally, topoisomerase IV is essential for chromosome segregation. It relaxes supercoiled DNA. Performs the decatenation events required during the replication of a circular DNA molecule. The protein is DNA topoisomerase 4 subunit A of Streptococcus pyogenes serotype M6 (strain ATCC BAA-946 / MGAS10394).